Consider the following 126-residue polypeptide: Tachykinin-3 (126 aa).

A signal peptide spans 1 to 20 (MRSTLLFAVILALSSARSLG). The propeptide occupies 21–83 (AVCEESQEQV…VGPKESPLPQ (63 aa)). Position 95 is a methionine amide (methionine 95). Positions 99–126 (NLQPDTPVDINQENIPSFGTFKYPPSVE) are excised as a propeptide. The segment at 102–126 (PDTPVDINQENIPSFGTFKYPPSVE) is disordered.

This sequence belongs to the tachykinin family.

It localises to the secreted. In terms of biological role, tachykinins are active peptides which excite neurons, evoke behavioral responses, are potent vasodilators and secretagogues, and contract (directly or indirectly) many smooth muscles. Is a critical central regulator of gonadal function. The sequence is that of Tachykinin-3 (TAC3) from Bos taurus (Bovine).